Consider the following 329-residue polypeptide: Phosphate import ATP-binding protein PstB (329 aa).

The ABC transporter domain maps to 83 to 325 (FEIENLNFWY…PKQKETNRYI (243 aa)). Position 116–123 (116–123 (GKSGCGKS)) interacts with ATP.

It belongs to the ABC transporter superfamily. Phosphate importer (TC 3.A.1.7) family. The complex is composed of two ATP-binding proteins (PstB), two transmembrane proteins (PstC and PstA) and a solute-binding protein (PstS).

It is found in the cell membrane. It catalyses the reaction phosphate(out) + ATP + H2O = ADP + 2 phosphate(in) + H(+). In terms of biological role, part of the ABC transporter complex PstSACB involved in phosphate import. Responsible for energy coupling to the transport system. The sequence is that of Phosphate import ATP-binding protein PstB from Mycoplasma pneumoniae (strain ATCC 29342 / M129 / Subtype 1) (Mycoplasmoides pneumoniae).